The following is a 365-amino-acid chain: PHD finger protein 6 (365 aa).

The residue at position 2 (S2) is an N-acetylserine. 2 short sequence motifs (nuclear localization signal) span residues 13–16 (RQRK) and 129–133 (RKHKK). The segment at 14 to 52 (QRKCGFCKSNRDKECGQLLISENQKVAAHHKCMLFSSAL) adopts a C2HC pre-PHD-type 1 zinc-finger fold. The interval 14–132 (QRKCGFCKSN…IYMVYCRKHK (119 aa)) is extended PHD1 domain (ePHD1). The PHD-type 1 zinc-finger motif lies at 80–132 (LMCSLCHCPGATIGCDVKTCHRTYHYHCALHDKAQIREKPSQGIYMVYCRKHK). Residues S138, S145, and S155 each carry the phosphoserine modification. The segment at 139–211 (EADLEESFNE…RSSPSDTRPK (73 aa)) is disordered. Positions 157-169 (KSKKKSRKGRPRK) match the Nucleolar localization signal motif. Residues 157 to 171 (KSKKKSRKGRPRKTN) show a composition bias toward basic residues. K173 participates in a covalent cross-link: Glycyl lysine isopeptide (Lys-Gly) (interchain with G-Cter in SUMO2). 2 positions are modified to phosphoserine: S183 and S199. The segment at 209–249 (RPKCGFCHVGEEENEARGKLHIFNAKKAAAHYKCMLFSSGT) adopts a C2HC pre-PHD-type 2 zinc-finger fold. The interval 209 to 330 (RPKCGFCHVG…IYKLYCKNHS (122 aa)) is extended PHD2 domain (ePHD2). K227 is covalently cross-linked (Glycyl lysine isopeptide (Lys-Gly) (interchain with G-Cter in SUMO2)). The PHD-type 2 zinc finger occupies 278-330 (MKCTLCSQPGATIGCEIKACVKTYHYHCGVQDKAKYIENMSRGIYKLYCKNHS). The tract at residues 330–365 (SGNDERDEEDEERESKSRGKVEIDQQQLTQQQLNGN) is disordered. The span at 342–352 (RESKSRGKVEI) shows a compositional bias: basic and acidic residues. Over residues 354–365 (QQQLTQQQLNGN) the composition is skewed to low complexity. T358 is modified (phosphothreonine).

Interacts with UBTF. Interacts with the NuRD complex component RBBP4 (via the nucleolar localization motif), the interaction mediates transcriptional repression activity.

The protein resides in the nucleus. It localises to the nucleolus. It is found in the chromosome. Its subcellular location is the centromere. The protein localises to the kinetochore. In terms of biological role, transcriptional regulator that associates with ribosomal RNA promoters and suppresses ribosomal RNA (rRNA) transcription. The polypeptide is PHD finger protein 6 (PHF6) (Pongo abelii (Sumatran orangutan)).